The primary structure comprises 573 residues: Cytosolic 5'-nucleotidase 1B (573 aa).

Residues methionine 1–lysine 11 show a composition bias toward basic residues. 2 disordered regions span residues methionine 1–glutamate 200 and glutamate 218–glutamate 238. The span at asparagine 12–glycine 35 shows a compositional bias: basic and acidic residues. A compositionally biased stretch (polar residues) spans asparagine 60–alanine 73. A compositionally biased stretch (low complexity) spans serine 93–serine 105. Polar residues predominate over residues threonine 115 to glutamine 136. Basic and acidic residues-rich tracts occupy residues tryptophan 161–leucine 174 and aspartate 182–proline 194. Residue aspartate 428 is the Nucleophile of the active site.

The protein belongs to the 5'-nucleotidase type 3 family. Requires Mg(2+) as cofactor. In terms of tissue distribution, expressed at highest levels in testis. Also expressed in brain, skeletal muscle, kidney and heart.

Its subcellular location is the cytoplasm. The enzyme catalyses a ribonucleoside 5'-phosphate + H2O = a ribonucleoside + phosphate. It carries out the reaction AMP + H2O = adenosine + phosphate. Its activity is regulated as follows. Activated by ADP. Functionally, catalyzes the hydrolysis of nucleotide monophosphates, releasing inorganic phosphate and the corresponding nucleoside, AMP is the major substrate. The polypeptide is Cytosolic 5'-nucleotidase 1B (Nt5c1b) (Mus musculus (Mouse)).